A 948-amino-acid polypeptide reads, in one-letter code: Isoleucine--tRNA ligase (948 aa).

The 'HIGH' region motif lies at 58–68; it reads PYANGSIHIGH. Glutamate 572 lines the L-isoleucyl-5'-AMP pocket. Residues 613 to 617 carry the 'KMSKS' region motif; it reads KMSKS. Lysine 616 lines the ATP pocket. Cysteine 911, cysteine 914, cysteine 931, and cysteine 934 together coordinate Zn(2+).

The protein belongs to the class-I aminoacyl-tRNA synthetase family. IleS type 1 subfamily. In terms of assembly, monomer. Zn(2+) is required as a cofactor.

It is found in the cytoplasm. The catalysed reaction is tRNA(Ile) + L-isoleucine + ATP = L-isoleucyl-tRNA(Ile) + AMP + diphosphate. Catalyzes the attachment of isoleucine to tRNA(Ile). As IleRS can inadvertently accommodate and process structurally similar amino acids such as valine, to avoid such errors it has two additional distinct tRNA(Ile)-dependent editing activities. One activity is designated as 'pretransfer' editing and involves the hydrolysis of activated Val-AMP. The other activity is designated 'posttransfer' editing and involves deacylation of mischarged Val-tRNA(Ile). The sequence is that of Isoleucine--tRNA ligase from Edwardsiella ictaluri (strain 93-146).